Consider the following 136-residue polypeptide: MVTSVLSRGTVSRVSSVLNRDVKQFGKQFLFDGREETCWNSDQGSYQWVLMEFPQNVLVSQIHLQFQGGFSCQTCTLEGCQKDGELVKIADFYPEDTNALQKFAFSEQSVSKLRISFLNSTDFFGRITVYHLDVLG.

Belongs to the NR2C2AP family.

It is found in the nucleus. Its function is as follows. May act as a repressor of nr2c2-mediated transactivation by suppressing the binding between nr2c2 and its response element in target genes. This Xenopus laevis (African clawed frog) protein is Nuclear receptor 2C2-associated protein (nr2c2ap).